The chain runs to 111 residues: Non-virion protein (111 aa).

It belongs to the novirhabdovirus NV protein family.

Plays an essential role for the viral pathogenicity. The protein is Non-virion protein (NV) of Acanthopagrus schlegelii (Black porgy).